Consider the following 325-residue polypeptide: D site-binding protein (325 aa).

Disordered regions lie at residues 1 to 100 (MARP…PGLL), 124 to 198 (LEHG…DPDT), and 212 to 255 (LALS…EQKD). Gly residues predominate over residues 17-28 (GPTGAPPGGGAL). Low complexity-rich tracts occupy residues 29–38 (LGLRSLLQGT) and 71–80 (AGPADASAGA). Phosphoserine is present on Ser86. The span at 88–100 (RGRPGAAPGPGLL) shows a compositional bias: low complexity. Residues 129–153 (PPSPPPPGGPSPAPSPVRTPAPSPR) are compositionally biased toward pro residues. Low complexity predominate over residues 166-176 (PGHAPARAALG). Basic and acidic residues predominate over residues 221–236 (ETFDPRRHRFSEEELK). One can recognise a bZIP domain in the interval 255-318 (DEKYWSRRYK…SHYRAVLSRY (64 aa)). Residues 257 to 279 (KYWSRRYKNNEAAKRSRDARRLK) are basic motif. Positions 283–297 (ISVRAAFLEKENALL) are leucine-zipper.

It belongs to the bZIP family. PAR subfamily. Binds DNA as a homodimer or a heterodimer. Can form a heterodimer with TEF.

The protein localises to the nucleus. Its function is as follows. This transcriptional activator recognizes and binds to the sequence 5'-RTTAYGTAAY-3' found in the promoter of genes such as albumin, CYP2A4 and CYP2A5. It is not essential for circadian rhythm generation, but modulates important clock output genes. May be a direct target for regulation by the circadian pacemaker component clock. May affect circadian period and sleep regulation. The chain is D site-binding protein (DBP) from Bos taurus (Bovine).